Reading from the N-terminus, the 838-residue chain is Rab effector MyRIP (838 aa).

Residues 4–124 form the RabBD domain; it reads KLDLSGLSNN…TQSLEWFYNN (121 aa). An FYVE-type zinc finger spans residues 58 to 112; that stretch reads KFNEHCCIRCCSPFTFLLNPKRQCLDCHYNICKSCCSYSQSERGYICAACQKSRH. A coiled-coil region spans residues 188 to 237; sequence ADTLTVALRVAEEAIEEAIAKAENYKDSLEKQNEARYLHEHKEELIEELA. 2 stretches are compositionally biased toward polar residues: residues 263 to 290 and 451 to 484; these read QNQK…TSQP and TFTQ…SPST. Disordered regions lie at residues 263-331, 444-501, 525-570, and 681-838; these read QNQK…TEVE, SQHD…ETHL, NFNP…LYSA, and ERDV…EKRN. Basic and acidic residues-rich tracts occupy residues 697-736 and 753-838; these read NKQE…ERQT and RQMK…EKRN. Residues 714-833 adopt a coiled-coil conformation; it reads KERRESKRES…DLEKKRKSIR (120 aa).

As to quaternary structure, interacts with prkar2aa.

The protein resides in the cytoplasm. It is found in the perinuclear region. It localises to the cytoplasmic vesicle. The protein localises to the secretory vesicle. In terms of biological role, may link secretory vesicles to actin filaments. May function as a protein kinase A-anchoring protein (AKAP). May act as a scaffolding protein that links PKA to components of the exocytosis machinery, thus facilitating exocytosis. In Danio rerio (Zebrafish), this protein is Rab effector MyRIP (myrip).